The primary structure comprises 147 residues: Hemoglobin subunit beta (147 aa).

Val-2 is modified (N-acetylvaline). In terms of domain architecture, Globin spans His-3–His-147. Phosphoserine is present on Ser-45. Lys-60 carries the N6-acetyllysine modification. Residue His-64 participates in heme b binding. N6-acetyllysine is present on Lys-83. Position 93 (His-93) interacts with heme b. S-nitrosocysteine is present on Cys-94.

It belongs to the globin family. In terms of assembly, heterotetramer of two alpha chains and two beta chains. Red blood cells.

In terms of biological role, involved in oxygen transport from the lung to the various peripheral tissues. This Camelus dromedarius (Dromedary) protein is Hemoglobin subunit beta (HBB).